The chain runs to 94 residues: Integration host factor subunit beta (94 aa).

This sequence belongs to the bacterial histone-like protein family. Heterodimer of an alpha and a beta chain.

This protein is one of the two subunits of integration host factor, a specific DNA-binding protein that functions in genetic recombination as well as in transcriptional and translational control. In Mannheimia succiniciproducens (strain KCTC 0769BP / MBEL55E), this protein is Integration host factor subunit beta.